We begin with the raw amino-acid sequence, 1013 residues long: NHS-like protein 3 (1013 aa).

A Phosphoserine modification is found at lysine 17. The tract at residues 20-195 (SAKAESDNRQ…PPGSRDAVRI (176 aa)) is disordered. Basic and acidic residues predominate over residues 73–89 (QHQERQKLSKGGWDHGD). Composition is skewed to polar residues over residues 90–99 (TQSIQSSQTG) and 106–120 (SIYS…SSTA). Residue serine 92 is modified to Phosphoserine. Residue tyrosine 108 is modified to Phosphotyrosine. 3 positions are modified to phosphoserine: serine 136, serine 143, and serine 159. At threonine 160 the chain carries Phosphothreonine. The segment covering 168-178 (VQKELGLRNNR) has biased composition (basic and acidic residues). Serine 213 bears the Phosphoserine mark. Arginine 318 bears the Asymmetric dimethylarginine mark. Phosphoserine occurs at positions 320, 325, 328, 336, 337, 339, and 340. Residues 330-1013 (RSLGRFSSAS…PGSDPQKKLV (684 aa)) are disordered. The span at 336-361 (SSASSPRPRSRNASSSSDNWSHSQSS) shows a compositional bias: low complexity. The segment covering 362 to 375 (ETIVSDGSTLSSKG) has biased composition (polar residues). Residues serine 398, serine 402, and serine 407 each carry the phosphoserine modification. A compositionally biased stretch (polar residues) spans 408–427 (TAETSDTASIRSSGQLSGRS). 2 stretches are compositionally biased toward low complexity: residues 484 to 493 (VGAVSCPPSS) and 515 to 530 (RTLS…SGTP). The residue at position 529 (threonine 529) is a Phosphothreonine. A Phosphoserine modification is found at serine 543. A compositionally biased stretch (low complexity) spans 564 to 577 (SVSSSLTSLCSSSS). At threonine 591 the chain carries Phosphothreonine. Positions 600–614 (PPHPKVPAPFSPPPS) are enriched in pro residues. Serine 610 bears the Phosphoserine mark. Over residues 615-633 (KSKSSNQAAPVLAAPAVAP) the composition is skewed to low complexity. The span at 635–657 (QVSTIDTSPASPSMPQTTLTPAQ) shows a compositional bias: polar residues. Phosphoserine occurs at positions 667 and 671. 2 stretches are compositionally biased toward pro residues: residues 668-683 (PPPS…PPPT) and 706-716 (PSWPPPPPPAP). The span at 779-795 (PQKDSVGKHSGAPREDS) shows a compositional bias: basic and acidic residues. The span at 814–829 (GASTGIPNPSPGSSAP) shows a compositional bias: polar residues. A phosphoserine mark is found at serine 838, serine 842, and serine 848. The segment covering 859-873 (ASSLAASESPASALP) has biased composition (low complexity). Serine 909, serine 952, and serine 959 each carry phosphoserine. Residues 942 to 961 (KAPPPVARKPSVGVPPPSPS) show a composition bias toward pro residues. Polar residues predominate over residues 964-975 (RTESLTAPSTNG).

In terms of biological role, able to directly activate the TNF-NFkappaB signaling pathway. In Mus musculus (Mouse), this protein is NHS-like protein 3 (Nhsl3).